Reading from the N-terminus, the 453-residue chain is Bifunctional protein GlmU (453 aa).

The tract at residues 1–226 (MSLNVVILAA…AMEVEGANNR (226 aa)) is pyrophosphorylase. Residues 8–11 (LAAG), Lys22, Gln73, 78–79 (GT), 100–102 (YGD), Gly137, Glu151, Asn166, and Asn224 contribute to the UDP-N-acetyl-alpha-D-glucosamine site. Residue Asp102 coordinates Mg(2+). Asn224 contacts Mg(2+). Residues 227–247 (VQLAQLERSYQKMQAERLMIA) are linker. The segment at 248 to 453 (GATLIDPARF…QNWARPVKKK (206 aa)) is N-acetyltransferase. Residues Arg330 and Lys348 each contribute to the UDP-N-acetyl-alpha-D-glucosamine site. The active-site Proton acceptor is the His360. The UDP-N-acetyl-alpha-D-glucosamine site is built by Tyr363 and Asn374. Acetyl-CoA contacts are provided by residues Ala377, 383-384 (NY), Ser402, Ala420, and Arg437.

It in the N-terminal section; belongs to the N-acetylglucosamine-1-phosphate uridyltransferase family. In the C-terminal section; belongs to the transferase hexapeptide repeat family. As to quaternary structure, homotrimer. Requires Mg(2+) as cofactor.

It is found in the cytoplasm. It carries out the reaction alpha-D-glucosamine 1-phosphate + acetyl-CoA = N-acetyl-alpha-D-glucosamine 1-phosphate + CoA + H(+). It catalyses the reaction N-acetyl-alpha-D-glucosamine 1-phosphate + UTP + H(+) = UDP-N-acetyl-alpha-D-glucosamine + diphosphate. The protein operates within nucleotide-sugar biosynthesis; UDP-N-acetyl-alpha-D-glucosamine biosynthesis; N-acetyl-alpha-D-glucosamine 1-phosphate from alpha-D-glucosamine 6-phosphate (route II): step 2/2. It participates in nucleotide-sugar biosynthesis; UDP-N-acetyl-alpha-D-glucosamine biosynthesis; UDP-N-acetyl-alpha-D-glucosamine from N-acetyl-alpha-D-glucosamine 1-phosphate: step 1/1. It functions in the pathway bacterial outer membrane biogenesis; LPS lipid A biosynthesis. Functionally, catalyzes the last two sequential reactions in the de novo biosynthetic pathway for UDP-N-acetylglucosamine (UDP-GlcNAc). The C-terminal domain catalyzes the transfer of acetyl group from acetyl coenzyme A to glucosamine-1-phosphate (GlcN-1-P) to produce N-acetylglucosamine-1-phosphate (GlcNAc-1-P), which is converted into UDP-GlcNAc by the transfer of uridine 5-monophosphate (from uridine 5-triphosphate), a reaction catalyzed by the N-terminal domain. The chain is Bifunctional protein GlmU from Aeromonas hydrophila subsp. hydrophila (strain ATCC 7966 / DSM 30187 / BCRC 13018 / CCUG 14551 / JCM 1027 / KCTC 2358 / NCIMB 9240 / NCTC 8049).